The primary structure comprises 564 residues: MQSSTESDRDIQDGPDADIHVAPPVEKEWSDGFDDNEVINGDNVEPPKRGLIGYLVIYLLCYPISFGGFLPGWDSGITAGFINMDNFKMNFGSYKHSTGEYYLSNVRMGLLVAMFSIGCAIGGLIFARLADTLGRRLAIVIVVLVYMVGAIIQISSNHKWYQYFVGKIIYGLGAGGCSVLCPMLLSEIAPTDLRGGLVSLYQLNMTFGIFLGYCSVYGTRKYDNTAQWRVPLGLCFLWTLIIIIGMLLVPESPRYLIECERHEEARASIAKINKVSPEDPWVLKQADEINAGVLAQRELGEASWKELFSVKTKVLQRLITGILVQTFLQLTGENYFFFYGTTIFKSVGLTDGFETSIVLGTVNFFSTIIAVMVVDKIGRRKCLLFGAAGMMACMVIFASIGVKCLYPHGQDGPSSKGAGNAMIVFTCFYIFCFATTWAPVAYIVVAESFPSKVKSRAMSISTACNWLWQFLIGFFTPFITGSIHFYYGYVFVGCLVAMFLYVFFFLPETIGLSLEEIQLLYEEGIKPWKSASWVPPSRRGIPSEESKTEKKDWKKFLKFSKGSD.

Residues 1-12 show a composition bias toward basic and acidic residues; the sequence is MQSSTESDRDIQ. The segment at 1 to 22 is disordered; sequence MQSSTESDRDIQDGPDADIHVA. Residues 1-52 are Cytoplasmic-facing; sequence MQSSTESDRDIQDGPDADIHVAPPVEKEWSDGFDDNEVINGDNVEPPKRGLI. Residues 53–73 traverse the membrane as a helical segment; sequence GYLVIYLLCYPISFGGFLPGW. The Extracellular segment spans residues 74–109; sequence DSGITAGFINMDNFKMNFGSYKHSTGEYYLSNVRMG. The helical transmembrane segment at 110 to 130 threads the bilayer; it reads LLVAMFSIGCAIGGLIFARLA. At 131–136 the chain is on the cytoplasmic side; that stretch reads DTLGRR. Residues 137–157 form a helical membrane-spanning segment; that stretch reads LAIVIVVLVYMVGAIIQISSN. Topologically, residues 158-167 are extracellular; the sequence is HKWYQYFVGK. Residues 168 to 188 traverse the membrane as a helical segment; that stretch reads IIYGLGAGGCSVLCPMLLSEI. Topologically, residues 189 to 194 are cytoplasmic; it reads APTDLR. A helical transmembrane segment spans residues 195–215; it reads GGLVSLYQLNMTFGIFLGYCS. Residues 216-229 are Extracellular-facing; the sequence is VYGTRKYDNTAQWR. The chain crosses the membrane as a helical span at residues 230–250; it reads VPLGLCFLWTLIIIIGMLLVP. At 251-333 the chain is on the cytoplasmic side; the sequence is ESPRYLIECE…VQTFLQLTGE (83 aa). A helical membrane pass occupies residues 334 to 350; that stretch reads NYFFFYGTTIFKSVGLT. At 351 to 356 the chain is on the extracellular side; it reads DGFETS. A helical transmembrane segment spans residues 357 to 374; that stretch reads IVLGTVNFFSTIIAVMVV. The Cytoplasmic portion of the chain corresponds to 375 to 381; the sequence is DKIGRRK. Residues 382-402 traverse the membrane as a helical segment; the sequence is CLLFGAAGMMACMVIFASIGV. Topologically, residues 403–424 are extracellular; that stretch reads KCLYPHGQDGPSSKGAGNAMIV. The chain crosses the membrane as a helical span at residues 425–445; it reads FTCFYIFCFATTWAPVAYIVV. The Cytoplasmic segment spans residues 446 to 462; sequence AESFPSKVKSRAMSIST. Residues 463 to 483 form a helical membrane-spanning segment; it reads ACNWLWQFLIGFFTPFITGSI. Residue His-484 is a topological domain, extracellular. Residues 485–505 form a helical membrane-spanning segment; that stretch reads FYYGYVFVGCLVAMFLYVFFF. The Cytoplasmic segment spans residues 506-564; it reads LPETIGLSLEEIQLLYEEGIKPWKSASWVPPSRRGIPSEESKTEKKDWKKFLKFSKGSD.

It belongs to the major facilitator superfamily. Sugar transporter (TC 2.A.1.1) family.

The protein resides in the membrane. In terms of biological role, probable glucose transporter. The polypeptide is Hexose transporter HXT17 (HXT17) (Saccharomyces cerevisiae (strain ATCC 204508 / S288c) (Baker's yeast)).